A 457-amino-acid polypeptide reads, in one-letter code: Glutamate--tRNA ligase 2 (457 aa).

A 'HIGH' region motif is present at residues P8–N18. The 'KMSKS' region signature appears at G249–R253. K252 serves as a coordination point for ATP.

Belongs to the class-I aminoacyl-tRNA synthetase family. Glutamate--tRNA ligase type 1 subfamily. In terms of assembly, monomer.

It localises to the cytoplasm. It catalyses the reaction tRNA(Glu) + L-glutamate + ATP = L-glutamyl-tRNA(Glu) + AMP + diphosphate. In terms of biological role, catalyzes the attachment of glutamate to tRNA(Glu) in a two-step reaction: glutamate is first activated by ATP to form Glu-AMP and then transferred to the acceptor end of tRNA(Glu). In Bartonella tribocorum (strain CIP 105476 / IBS 506), this protein is Glutamate--tRNA ligase 2.